Reading from the N-terminus, the 503-residue chain is Lithocholate 6-beta-hydroxylase (503 aa).

A heme-binding site is contributed by Cys-442.

Belongs to the cytochrome P450 family. The cofactor is heme.

Its subcellular location is the endoplasmic reticulum membrane. The protein localises to the microsome membrane. It carries out the reaction lithocholate + reduced [NADPH--hemoprotein reductase] + O2 = 6beta-hydroxylithocholate + oxidized [NADPH--hemoprotein reductase] + H2O + H(+). Its function is as follows. Catalyzes the 6 beta-hydroxylation of lithocholic acid and steroid hormones. The polypeptide is Lithocholate 6-beta-hydroxylase (CYP3A10) (Mesocricetus auratus (Golden hamster)).